The chain runs to 195 residues: 4'-phosphopantetheinyl transferase AcpT (195 aa).

Belongs to the P-Pant transferase superfamily. Gsp/Sfp/HetI/AcpT family.

It catalyses the reaction apo-[ACP] + CoA = holo-[ACP] + adenosine 3',5'-bisphosphate + H(+). May be involved in an alternative pathway for phosphopantetheinyl transfer and holo-ACP synthesis in E.coli. The native apo-protein substrate is unknown. Is able to functionally replace AcpS in vivo but only when expressed at high levels. The sequence is that of 4'-phosphopantetheinyl transferase AcpT from Escherichia coli (strain K12).